The sequence spans 169 residues: Large ribosomal subunit protein uL10 (169 aa).

Belongs to the universal ribosomal protein uL10 family. In terms of assembly, part of the ribosomal stalk of the 50S ribosomal subunit. The N-terminus interacts with L11 and the large rRNA to form the base of the stalk. The C-terminus forms an elongated spine to which L12 dimers bind in a sequential fashion forming a multimeric L10(L12)X complex.

Forms part of the ribosomal stalk, playing a central role in the interaction of the ribosome with GTP-bound translation factors. This is Large ribosomal subunit protein uL10 from Orientia tsutsugamushi (strain Boryong) (Rickettsia tsutsugamushi).